An 80-amino-acid polypeptide reads, in one-letter code: Cell division protein ZapB (80 aa).

Positions 3 to 80 (FEVLEQLEAK…NLLGKMDDVE (78 aa)) form a coiled coil.

This sequence belongs to the ZapB family. In terms of assembly, homodimer. The ends of the coiled-coil dimer bind to each other, forming polymers. Interacts with FtsZ.

It is found in the cytoplasm. Non-essential, abundant cell division factor that is required for proper Z-ring formation. It is recruited early to the divisome by direct interaction with FtsZ, stimulating Z-ring assembly and thereby promoting cell division earlier in the cell cycle. Its recruitment to the Z-ring requires functional FtsA or ZipA. The protein is Cell division protein ZapB of Vibrio atlanticus (strain LGP32) (Vibrio splendidus (strain Mel32)).